Reading from the N-terminus, the 382-residue chain is MKQPVIIAAKRIAFGKYGGRLRHLEPESLLEPLFNHFTDQYPKVMSLLDDVILGNTVGNGGNLARKSLLEAGLDFKIPGITIDRQCGSGLEAVIQACRMVQSGAGTIYIAGGVESTSRAPWKIKRPQSVYESEFPQFFERAPFAREGEDPSMIEAAENVAKKYHISRNEQDDFAYRSHQLASKNMNNGNISQEILPFKVKGEYFNQDESIKPQLTLRTLGRLKPLLNEGTVTVGNSCKKNDGAVLLIVMEENRARQLGFTEGIKFVNSATVGVQPQYLGVGPVPAVNQLLAQERLTINDINAVELNEAFSSQVIASQQQLNIPLNKLNCWGGAIATGHPYGASGAALVTRLFYMKHQFRTIATMGIGGGIGNAALFERWYGN.

The Acyl-thioester intermediate role is filled by Cys86. The active-site Proton acceptor is His338.

It belongs to the thiolase-like superfamily. Thiolase family.

This is Putative acetyl-CoA C-acetyltransferase VraB (vraB) from Staphylococcus epidermidis (strain ATCC 12228 / FDA PCI 1200).